Reading from the N-terminus, the 554-residue chain is Phosphomethylpyrimidine synthase (554 aa).

Residues asparagine 191, methionine 220, tyrosine 249, histidine 285, 305–307, 346–349, and glutamate 385 each bind substrate; these read SRG and DGLR. Zn(2+) is bound at residue histidine 389. Tyrosine 412 provides a ligand contact to substrate. A Zn(2+)-binding site is contributed by histidine 453. Cysteine 533, cysteine 536, and cysteine 541 together coordinate [4Fe-4S] cluster.

The protein belongs to the ThiC family. As to quaternary structure, homodimer. It depends on [4Fe-4S] cluster as a cofactor.

The enzyme catalyses 5-amino-1-(5-phospho-beta-D-ribosyl)imidazole + S-adenosyl-L-methionine = 4-amino-2-methyl-5-(phosphooxymethyl)pyrimidine + CO + 5'-deoxyadenosine + formate + L-methionine + 3 H(+). It functions in the pathway cofactor biosynthesis; thiamine diphosphate biosynthesis. Catalyzes the synthesis of the hydroxymethylpyrimidine phosphate (HMP-P) moiety of thiamine from aminoimidazole ribotide (AIR) in a radical S-adenosyl-L-methionine (SAM)-dependent reaction. The chain is Phosphomethylpyrimidine synthase from Ehrlichia chaffeensis (strain ATCC CRL-10679 / Arkansas).